Consider the following 172-residue polypeptide: Male-specific submandibular salivary gland protein (172 aa).

The first 15 residues, 1 to 15 (MVKFLLLALALGVSC), serve as a signal peptide directing secretion. An N-linked (GlcNAc...) asparagine glycan is attached at N41. Disulfide bonds link C60–C64 and C79–C170.

This sequence belongs to the calycin superfamily. Lipocalin family. In terms of processing, N-glycosylated. In terms of tissue distribution, expressed in acinar cells of the submandibular salivary gland from where it is secreted into saliva (at protein level). Also released from the submandibular salivary gland into blood and excreted in urine (at protein level). Expressed in the lacrimal gland from where it is secreted into tears (at protein level).

It localises to the secreted. Its subcellular location is the cytoplasm. This Mesocricetus auratus (Golden hamster) protein is Male-specific submandibular salivary gland protein.